Here is a 351-residue protein sequence, read N- to C-terminus: Autoinducer 2 import system permease protein LsrC (351 aa).

The next 9 membrane-spanning stretches (helical) occupy residues 14–34, 39–59, 70–90, 93–113, 115–135, 155–175, 213–233, 252–272, and 284–304; these read LLAI…YFSL, MIFS…LVML, ITGL…GLVA, LFAL…VTWL, IPAI…MLLL, ILFS…SMAW, MNGV…GFIP, GISL…AFLL, and LPAW…LVFD.

This sequence belongs to the binding-protein-dependent transport system permease family. AraH/RbsC subfamily. The complex is composed of two ATP-binding proteins (LsrA), two transmembrane proteins (LsrC and LsrD) and a solute-binding protein (LsrB).

Its subcellular location is the cell inner membrane. Functionally, part of the ABC transporter complex LsrABCD involved in autoinducer 2 (AI-2) import. Probably responsible for the translocation of the substrate across the membrane. This chain is Autoinducer 2 import system permease protein LsrC (lsrC), found in Yersinia pseudotuberculosis serotype IB (strain PB1/+).